A 122-amino-acid polypeptide reads, in one-letter code: Large ribosomal subunit protein uL14 (122 aa).

The protein belongs to the universal ribosomal protein uL14 family. As to quaternary structure, part of the 50S ribosomal subunit. Forms a cluster with proteins L3 and L19. In the 70S ribosome, L14 and L19 interact and together make contacts with the 16S rRNA in bridges B5 and B8.

Its function is as follows. Binds to 23S rRNA. Forms part of two intersubunit bridges in the 70S ribosome. In Nitrosococcus oceani (strain ATCC 19707 / BCRC 17464 / JCM 30415 / NCIMB 11848 / C-107), this protein is Large ribosomal subunit protein uL14.